Reading from the N-terminus, the 232-residue chain is Octanoyltransferase (232 aa).

The region spanning 32–219 (NIIYDTLILL…SFKVFNFSSY (188 aa)) is the BPL/LPL catalytic domain. Substrate is bound by residues 77 to 84 (RGGDITYH), 140 to 142 (AIG), and 153 to 155 (GFA). Cys-171 (acyl-thioester intermediate) is an active-site residue.

Belongs to the LipB family.

The protein resides in the cytoplasm. It catalyses the reaction octanoyl-[ACP] + L-lysyl-[protein] = N(6)-octanoyl-L-lysyl-[protein] + holo-[ACP] + H(+). Its pathway is protein modification; protein lipoylation via endogenous pathway; protein N(6)-(lipoyl)lysine from octanoyl-[acyl-carrier-protein]: step 1/2. In terms of biological role, catalyzes the transfer of endogenously produced octanoic acid from octanoyl-acyl-carrier-protein onto the lipoyl domains of lipoate-dependent enzymes. Lipoyl-ACP can also act as a substrate although octanoyl-ACP is likely to be the physiological substrate. The protein is Octanoyltransferase of Dictyoglomus turgidum (strain DSM 6724 / Z-1310).